The chain runs to 324 residues: DNA repair and recombination protein RadA (324 aa).

Position 114–121 (114–121 (GEFGSGKT)) interacts with ATP.

This sequence belongs to the eukaryotic RecA-like protein family.

Functionally, involved in DNA repair and in homologous recombination. Binds and assemble on single-stranded DNA to form a nucleoprotein filament. Hydrolyzes ATP in a ssDNA-dependent manner and promotes DNA strand exchange between homologous DNA molecules. This Saccharolobus islandicus (strain Y.N.15.51 / Yellowstone #2) (Sulfolobus islandicus) protein is DNA repair and recombination protein RadA.